The chain runs to 67 residues: MTSEMQLQAQIDVIEKENKELRRRNEELGQTVECQNKQIVTQNWRLLFFASSWIVYGIVSAIKYLWG.

A coiled-coil region spans residues 1-40 (MTSEMQLQAQIDVIEKENKELRRRNEELGQTVECQNKQIV). The chain crosses the membrane as a helical span at residues 44 to 66 (WRLLFFASSWIVYGIVSAIKYLW).

The protein resides in the cell membrane. This is SPbeta prophage-derived uncharacterized protein YopZ (yopZ) from Bacillus subtilis (strain 168).